The chain runs to 255 residues: Acetyl-coenzyme A carboxylase carboxyl transferase subunit alpha (255 aa).

In terms of domain architecture, CoA carboxyltransferase C-terminal spans 1–235 (MNIAKIVREA…KKELQTELAR (235 aa)).

This sequence belongs to the AccA family. In terms of assembly, acetyl-CoA carboxylase is a heterohexamer composed of biotin carboxyl carrier protein (AccB), biotin carboxylase (AccC) and two subunits each of ACCase subunit alpha (AccA) and ACCase subunit beta (AccD).

It localises to the cytoplasm. It catalyses the reaction N(6)-carboxybiotinyl-L-lysyl-[protein] + acetyl-CoA = N(6)-biotinyl-L-lysyl-[protein] + malonyl-CoA. Its pathway is lipid metabolism; malonyl-CoA biosynthesis; malonyl-CoA from acetyl-CoA: step 1/1. In terms of biological role, component of the acetyl coenzyme A carboxylase (ACC) complex. First, biotin carboxylase catalyzes the carboxylation of biotin on its carrier protein (BCCP) and then the CO(2) group is transferred by the carboxyltransferase to acetyl-CoA to form malonyl-CoA. The chain is Acetyl-coenzyme A carboxylase carboxyl transferase subunit alpha from Streptococcus pneumoniae (strain CGSP14).